Consider the following 150-residue polypeptide: uncharacterized protein (150 aa).

The N-terminal stretch at 1 to 28 (MPLDVWIAFSYFIDFFQWLFMLNAEVMR) is a signal peptide.

This is an uncharacterized protein from Archaeoglobus fulgidus (strain ATCC 49558 / DSM 4304 / JCM 9628 / NBRC 100126 / VC-16).